The primary structure comprises 83 residues: Aspergillic acid biosynthesis cluster protein F (83 aa).

It functions in the pathway secondary metabolite biosynthesis. In terms of biological role, part of the gene cluster that mediates the biosynthesis of aspergillic acid, a hydroxamic acid-containing pyrazinone with aliphatic side chains that originates from leucine (Leu) and isoleucine (Ile). Aspergillic acid has antibiotic properties and was shown to be lethal to mice. The first step in the pathway is the production of deoxyaspergillic acid via a condensation between the Ile amine and the Leu carboxylic acid, followed by a reductive release from the protein forming the dipeptide aldehyde NH(2)-Leu-Ile-CHO, which could undergo an intermolecular cyclization resulting in a dihydropyrazinone. As the NRPS asaC lacks a condensation domain, it is improbable that it is responsible for condensation of Leu and Ile. One possibility is that asaC acts on a previously condensed dipeptide and functions as a Leu-Ile reductase to yield deoxyaspergillic acid. After asaC forms deoxyaspergillic acid, the cytochrome P450 asaD oxidizes the pyrazinone to the hydroxamic acid-containing bioactive metabolite aspergillic acid. The hydroxylase/desaturase asaB can then convert aspergillic acid to hydroxyaspergillic acid. Both aspergillic acid and hydroxyaspergillic acid can form complexes with iron producing ferriaspergillin analogs. This chain is Aspergillic acid biosynthesis cluster protein F, found in Aspergillus flavus (strain ATCC 200026 / FGSC A1120 / IAM 13836 / NRRL 3357 / JCM 12722 / SRRC 167).